The sequence spans 297 residues: Mycothiol acetyltransferase (297 aa).

2 consecutive N-acetyltransferase domains span residues 8–153 (DALD…PPLP) and 156–297 (VALR…QYAL). E36 lines the 1D-myo-inositol 2-(L-cysteinylamino)-2-deoxy-alpha-D-glucopyranoside pocket. Residue 80–82 (LAV) coordinates acetyl-CoA. 1D-myo-inositol 2-(L-cysteinylamino)-2-deoxy-alpha-D-glucopyranoside is bound by residues E183, K223, and E231. Acetyl-CoA contacts are provided by residues 235–237 (VGV) and 242–248 (QGGGLGK). A 1D-myo-inositol 2-(L-cysteinylamino)-2-deoxy-alpha-D-glucopyranoside-binding site is contributed by Y269. 274–279 (NSPAVR) is a binding site for acetyl-CoA.

The protein belongs to the acetyltransferase family. MshD subfamily. As to quaternary structure, monomer.

The catalysed reaction is 1D-myo-inositol 2-(L-cysteinylamino)-2-deoxy-alpha-D-glucopyranoside + acetyl-CoA = mycothiol + CoA + H(+). In terms of biological role, catalyzes the transfer of acetyl from acetyl-CoA to desacetylmycothiol (Cys-GlcN-Ins) to form mycothiol. This is Mycothiol acetyltransferase from Actinosynnema mirum (strain ATCC 29888 / DSM 43827 / JCM 3225 / NBRC 14064 / NCIMB 13271 / NRRL B-12336 / IMRU 3971 / 101).